The chain runs to 76 residues: Exodeoxyribonuclease 7 small subunit (76 aa).

The protein belongs to the XseB family. In terms of assembly, heterooligomer composed of large and small subunits.

It is found in the cytoplasm. It catalyses the reaction Exonucleolytic cleavage in either 5'- to 3'- or 3'- to 5'-direction to yield nucleoside 5'-phosphates.. Bidirectionally degrades single-stranded DNA into large acid-insoluble oligonucleotides, which are then degraded further into small acid-soluble oligonucleotides. This is Exodeoxyribonuclease 7 small subunit from Legionella pneumophila (strain Paris).